The following is a 114-amino-acid chain: Hydrogenase maturation factor HypA (114 aa).

H2 contacts Ni(2+). C73, C76, C89, and C92 together coordinate Zn(2+).

Belongs to the HypA/HybF family.

Functionally, involved in the maturation of [NiFe] hydrogenases. Required for nickel insertion into the metal center of the hydrogenase. The sequence is that of Hydrogenase maturation factor HypA from Caldanaerobacter subterraneus subsp. tengcongensis (strain DSM 15242 / JCM 11007 / NBRC 100824 / MB4) (Thermoanaerobacter tengcongensis).